The primary structure comprises 251 residues: 1-(5-phosphoribosyl)-5-[(5-phosphoribosylamino)methylideneamino] imidazole-4-carboxamide isomerase (251 aa).

The active-site Proton acceptor is Asp-8. The Proton donor role is filled by Asp-131.

It belongs to the HisA/HisF family.

The protein localises to the cytoplasm. It catalyses the reaction 1-(5-phospho-beta-D-ribosyl)-5-[(5-phospho-beta-D-ribosylamino)methylideneamino]imidazole-4-carboxamide = 5-[(5-phospho-1-deoxy-D-ribulos-1-ylimino)methylamino]-1-(5-phospho-beta-D-ribosyl)imidazole-4-carboxamide. Its pathway is amino-acid biosynthesis; L-histidine biosynthesis; L-histidine from 5-phospho-alpha-D-ribose 1-diphosphate: step 4/9. In Burkholderia lata (strain ATCC 17760 / DSM 23089 / LMG 22485 / NCIMB 9086 / R18194 / 383), this protein is 1-(5-phosphoribosyl)-5-[(5-phosphoribosylamino)methylideneamino] imidazole-4-carboxamide isomerase.